Reading from the N-terminus, the 61-residue chain is DNA-directed RNA polymerase subunit Rpo6 (61 aa).

The protein belongs to the archaeal Rpo6/eukaryotic RPB6 RNA polymerase subunit family. As to quaternary structure, part of the RNA polymerase complex.

It is found in the cytoplasm. It catalyses the reaction RNA(n) + a ribonucleoside 5'-triphosphate = RNA(n+1) + diphosphate. Its function is as follows. DNA-dependent RNA polymerase (RNAP) catalyzes the transcription of DNA into RNA using the four ribonucleoside triphosphates as substrates. In Thermoplasma acidophilum (strain ATCC 25905 / DSM 1728 / JCM 9062 / NBRC 15155 / AMRC-C165), this protein is DNA-directed RNA polymerase subunit Rpo6.